We begin with the raw amino-acid sequence, 320 residues long: tRNA-cytidine(32) 2-sulfurtransferase (320 aa).

Positions 54-59 (SGGKDS) match the PP-loop motif motif. The [4Fe-4S] cluster site is built by cysteine 129, cysteine 132, and cysteine 220.

This sequence belongs to the TtcA family. Homodimer. The cofactor is Mg(2+). [4Fe-4S] cluster is required as a cofactor.

Its subcellular location is the cytoplasm. The catalysed reaction is cytidine(32) in tRNA + S-sulfanyl-L-cysteinyl-[cysteine desulfurase] + AH2 + ATP = 2-thiocytidine(32) in tRNA + L-cysteinyl-[cysteine desulfurase] + A + AMP + diphosphate + H(+). The protein operates within tRNA modification. Its function is as follows. Catalyzes the ATP-dependent 2-thiolation of cytidine in position 32 of tRNA, to form 2-thiocytidine (s(2)C32). The sulfur atoms are provided by the cysteine/cysteine desulfurase (IscS) system. This is tRNA-cytidine(32) 2-sulfurtransferase from Bordetella parapertussis (strain 12822 / ATCC BAA-587 / NCTC 13253).